We begin with the raw amino-acid sequence, 232 residues long: Phosphatidylserine decarboxylase proenzyme (232 aa).

Serine 190 acts as the Schiff-base intermediate with substrate; via pyruvic acid in catalysis. Serine 190 carries the post-translational modification Pyruvic acid (Ser); by autocatalysis.

The protein belongs to the phosphatidylserine decarboxylase family. PSD-A subfamily. As to quaternary structure, heterodimer of a large membrane-associated beta subunit and a small pyruvoyl-containing alpha subunit. Pyruvate is required as a cofactor. Is synthesized initially as an inactive proenzyme. Formation of the active enzyme involves a self-maturation process in which the active site pyruvoyl group is generated from an internal serine residue via an autocatalytic post-translational modification. Two non-identical subunits are generated from the proenzyme in this reaction, and the pyruvate is formed at the N-terminus of the alpha chain, which is derived from the carboxyl end of the proenzyme. The post-translation cleavage follows an unusual pathway, termed non-hydrolytic serinolysis, in which the side chain hydroxyl group of the serine supplies its oxygen atom to form the C-terminus of the beta chain, while the remainder of the serine residue undergoes an oxidative deamination to produce ammonia and the pyruvoyl prosthetic group on the alpha chain.

The protein resides in the cell membrane. The catalysed reaction is a 1,2-diacyl-sn-glycero-3-phospho-L-serine + H(+) = a 1,2-diacyl-sn-glycero-3-phosphoethanolamine + CO2. It functions in the pathway phospholipid metabolism; phosphatidylethanolamine biosynthesis; phosphatidylethanolamine from CDP-diacylglycerol: step 2/2. In terms of biological role, catalyzes the formation of phosphatidylethanolamine (PtdEtn) from phosphatidylserine (PtdSer). The protein is Phosphatidylserine decarboxylase proenzyme of Mesorhizobium japonicum (strain LMG 29417 / CECT 9101 / MAFF 303099) (Mesorhizobium loti (strain MAFF 303099)).